Here is a 259-residue protein sequence, read N- to C-terminus: Ribonuclease HII (259 aa).

One can recognise an RNase H type-2 domain in the interval 70–258; the sequence is TLIAGIDEVG…VKSLVLGKKE (189 aa). 3 residues coordinate a divalent metal cation: Asp76, Glu77, and Asp168.

Belongs to the RNase HII family. Mn(2+) serves as cofactor. It depends on Mg(2+) as a cofactor.

The protein resides in the cytoplasm. The catalysed reaction is Endonucleolytic cleavage to 5'-phosphomonoester.. Its function is as follows. Endonuclease that specifically degrades the RNA of RNA-DNA hybrids. The polypeptide is Ribonuclease HII (Streptococcus pneumoniae serotype 4 (strain ATCC BAA-334 / TIGR4)).